A 450-amino-acid chain; its full sequence is Ornithine decarboxylase (450 aa).

Lysine 59 is subject to N6-(pyridoxal phosphate)lysine. Pyridoxal 5'-phosphate-binding positions include serine 190, glycine 227, and 264–267; that span reads EPGR. The residue at position 293 (serine 293) is a Phosphoserine; by CK2. 321–322 contributes to the substrate binding site; that stretch reads YD. Residue cysteine 350 is the Proton donor; shared with dimeric partner of the active site. A substrate-binding site is contributed by aspartate 351. Residue tyrosine 379 participates in pyridoxal 5'-phosphate binding.

The protein belongs to the Orn/Lys/Arg decarboxylase class-II family. As to quaternary structure, homodimer. Only the dimer is catalytically active, as the active sites are constructed of residues from both monomers. It depends on pyridoxal 5'-phosphate as a cofactor.

It carries out the reaction L-ornithine + H(+) = putrescine + CO2. The protein operates within amine and polyamine biosynthesis; putrescine biosynthesis via L-ornithine pathway; putrescine from L-ornithine: step 1/1. Its activity is regulated as follows. Inhibited by antizymes (AZs) in response to polyamine levels. AZs inhibit the assembly of the functional homodimer by binding to ODC monomers and targeting them for ubiquitin-independent proteolytic destruction by the 26S proteasome. In terms of biological role, catalyzes the first and rate-limiting step of polyamine biosynthesis that converts ornithine into putrescine, which is the precursor for the polyamines, spermidine and spermine. Polyamines are essential for cell proliferation and are implicated in cellular processes, ranging from DNA replication to apoptosis. In Gallus gallus (Chicken), this protein is Ornithine decarboxylase (ODC1).